Reading from the N-terminus, the 278-residue chain is MDKSGIDSLDHVTSDAVELANRSDNSSDSRLFKTQCIPYSPKREKRNPIRKFVRTPESVHASDSSSDSSFEPIPLTMKAIFERFKNRKKRYKKKKKKRYQPTGRPRGRPEGRRNPIYSLIDKKKQFRSRGSGFPFLESENEKNPPWRKILTFEQAVARGFFNYIEKLKYEHHLKESLKQMNVGEDLENEDFDSRRYKFLDDDGSISPIEESTAEDEDATHLEDNECDIKLAGDSFIVSSEFPVRLSVYLEEEDITEEAALSKKRATKAKNTGQRGLKM.

Disordered regions lie at residues 19–71 and 88–115; these read LANR…SSFE and KKRY…RRNP. Ser-23 is subject to Phosphoserine. Composition is skewed to basic residues over residues 43–53 and 88–99; these read REKRNPIRKFV and KKRYKKKKKKRY. Residues Ser-138 and Ser-234 each carry the phosphoserine modification.

In terms of assembly, component of the transcription factor SL1/TIF-IB complex, composed of TBP and at least TAF1A, TAF1B, TAF1C and TAF1D. Interacts with UBTF.

It localises to the nucleus. Its function is as follows. Component of the transcription factor SL1/TIF-IB complex, which is involved in the assembly of the PIC (preinitiation complex) during RNA polymerase I-dependent transcription. The rate of PIC formation probably is primarily dependent on the rate of association of SL1/TIF-IB with the rDNA promoter. SL1/TIF-IB is involved in stabilization of nucleolar transcription factor 1/UBTF on rDNA. Formation of SL1/TIF-IB excludes the association of TBP with TFIID subunits. This Pongo abelii (Sumatran orangutan) protein is TATA box-binding protein-associated factor RNA polymerase I subunit D (TAF1D).